The chain runs to 7073 residues: Replicase polyprotein 1ab (7073 aa).

Topologically, residues M1 to K2202 are cytoplasmic. Positions T12–G127 constitute a CoV Nsp1 globular domain. Residues E148–G179 form the BetaCoV Nsp1 C-terminal domain. Residues T183–R456 form the CoV Nsp2 N-terminal domain. Zn(2+) is bound by residues C200, C231, H234, H236, C323, C326, C341, C344, C370, C373, H382, and C416. The tract at residues C200–H236 is C2H2. The segment at C323–C344 is C4. The interval C370–C416 is C2HC. Residues R458–M688 enclose the CoV Nsp2 middle domain. A CoV Nsp2 C-terminal domain is found at I690 to G818. The 109-residue stretch at K822–E930 folds into the Ubiquitin-like 1 domain. 2 disordered regions span residues R972–V1003 and R1175–V1198. Residues E974–P999 show a composition bias toward acidic residues. Positions V1003–L1169 constitute a Macro 1 domain. 2 Macro domains span residues K1207–E1335 and I1343–S1470. The DPUP domain maps to T1472 to S1538. The 56-residue stretch at V1542 to V1597 folds into the Ubiquitin-like 2 domain. One can recognise a Peptidase C16 domain in the interval Y1611–G1875. C1651 (for PL-PRO activity) is an active-site residue. Zn(2+) is bound by residues C1729, C1732, C1764, and C1766. The C4-type zinc-finger motif lies at C1729 to C1766. Catalysis depends on for PL-PRO activity residues H1812 and D1826. The 111-residue stretch at P1888–T1998 folds into the Nucleic acid-binding domain. Residues P2023–N2132 form the G2M domain. A helical transmembrane segment spans residues L2203–V2223. An HD1 region spans residues L2203–M2324. In terms of domain architecture, 3Ecto spans T2224–D2294. Over T2224–E2303 the chain is Lumenal. 2 disulfides stabilise this stretch: C2240-C2268 and C2259-C2265. Residues W2304–M2324 traverse the membrane as a helical segment. Residues Q2325–T2754 lie on the Cytoplasmic side of the membrane. The interval K2372–D2462 is Y1. The region spanning K2372–G2740 is the CoV Nsp3 Y domain. H2376, C2381, C2386, C2389, C2422, H2425, C2429, and C2432 together coordinate Zn(2+). The ZF1 stretch occupies residues H2376 to C2389. The segment at C2422–C2432 is ZF2. A Y2 region spans residues Q2463–V2557. The segment at Q2463 to G2740 is coV-Y. The Y3 stretch occupies residues G2558 to D2639. Residues L2640–G2740 are Y4. A helical transmembrane segment spans residues L2755–I2775. Positions L2755–I3125 are HD2. The Lumenal segment spans residues H2776–S3021. Residues A3022 to M3042 form a helical membrane-spanning segment. Topologically, residues K3043–S3076 are cytoplasmic. Residues F3077–V3097 traverse the membrane as a helical segment. Residues S3098 to Q3104 lie on the Lumenal side of the membrane. Residues W3105–I3125 form a helical membrane-spanning segment. Topologically, residues S3126 to T3563 are cytoplasmic. The Nsp4C domain occupies V3142 to Q3240. The Peptidase C30 domain occupies S3241–Q3546. Residues H3281 and C3385 each act as for 3CL-PRO activity in the active site. A helical transmembrane segment spans residues F3564–Y3584. Residues F3564–L3776 form an HD3 region. Residue E3585 is a topological domain, lumenal. Residues N3586–V3606 form a helical membrane-spanning segment. Residues K3607–A3611 are Cytoplasmic-facing. A helical membrane pass occupies residues F3612–M3632. At P3633–K3657 the chain is on the lumenal side. Residues D3658–Y3678 form a helical membrane-spanning segment. The Cytoplasmic portion of the chain corresponds to D3679–T3727. The chain crosses the membrane as a helical span at residues I3728 to I3748. At T3749–C3755 the chain is on the lumenal side. The chain crosses the membrane as a helical span at residues I3756–L3776. Topologically, residues L3777–N7073 are cytoplasmic. The RdRp Nsp7 cofactor domain occupies S3837 to Q3919. The region spanning A3920–Q4117 is the RdRp Nsp8 cofactor domain. Residues N4118–Q4230 form the Nsp9 ssRNA-binding domain. The 139-residue stretch at A4231 to Q4369 folds into the ExoN/MTase coactivator domain. Zn(2+)-binding residues include C4304, C4307, H4313, C4320, C4347, C4350, C4358, and C4360. Zinc fingers lie at residues C4304–C4320 and C4347–C4360. The region spanning F4376–L4630 is the NiRAN domain. Mn(2+)-binding residues include N4578 and D4587. The 99-residue stretch at I4635–S4733 folds into the Nsp12 Interface domain. Zn(2+) contacts are provided by H4664, C4670, C4675, C4679, and C4856. In terms of domain architecture, Nsp12 RNA-dependent RNA polymerase spans R4734 to Q5301. Residues S4736–A4950 form a rdRp Fingers N-ter region. Residues T4951–P4989 are rdRp Palm N-ter. The 163-residue stretch at P4981–G5143 folds into the RdRp catalytic domain. The tract at residues K4990–G5048 is rdRp Fingers C-ter. Zn(2+)-binding residues include H5011, C5014, and C5015. A rdRp Palm C-ter region spans residues T5049 to Q5184. Active-site residues include S5128, D5129, and D5130. The rdRp Thumb stretch occupies residues H5185–Q5301. Residues A5302–D5414 form the CV ZBD domain. Zn(2+) is bound by residues C5306, C5309, C5317, C5320, C5327, C5330, H5334, H5340, C5351, C5356, C5373, and H5376. One can recognise a (+)RNA virus helicase ATP-binding domain in the interval N5558–L5739. G5583–S5590 provides a ligand contact to ATP. One can recognise a (+)RNA virus helicase C-terminal domain in the interval G5740–L5909. Residues M5974 to V6189 form the ExoN domain. Residues D5992, E5994, and E6093 contribute to the active site. Mg(2+) contacts are provided by E5994 and E6093. The Zn(2+) site is built by C6109, C6112, C6128, H6131, H6159, C6163, and H6166. Catalysis depends on residues H6170 and D6175. H6170 and D6175 together coordinate Mg(2+). C6181 is a Zn(2+) binding site. One can recognise an N7-MTase domain in the interval Y6198–Q6429. An S-adenosyl-L-methionine-binding site is contributed by D6233–A6239. Residues C6316–T6330 are gpppA-binding. Residues C6354, C6375, C6386, and H6389 each coordinate Zn(2+). In terms of domain architecture, Nsp15 N-terminal oligomerization spans S6430–R6490. The AV-Nsp11N/CoV-Nsp15M domain occupies N6491–Q6616. In terms of domain architecture, NendoU spans K6633 to P6772. Catalysis depends on residues H6663, H6678, K6718, K6821, D6905, K6945, and E6978. Positions S6777–V7071 constitute a Nidovirus-type SAM-dependent 2'-O-MTase domain.

This sequence belongs to the coronaviruses polyprotein 1ab family. Interacts with host PHB and PHB2. As to quaternary structure, interacts with papain-like protease nsp3 and non-structural protein 6. In terms of assembly, monomer. Homodimer. Only the homodimer shows catalytic activity. Interacts with nsp8 and nsp12 to form the replication-transcription complex (RTC): nsp12, nsp7, two subunits of nsp8, and up to two subunits of nsp13. Eight copies of nsp7 and eight copies of nsp8 assemble to form a heterohexadecamer dsRNA-encircling ring structure. As to quaternary structure, interacts with nsp7, nsp13 and nsp12 to form the replication-transcription complex (RTC): nsp12, nsp7, two subunits of nsp8, and up to two subunits of nsp13. Eight copies of nsp7 and eight copies of nsp8 assemble to form a heterohexadecamer dsRNA-encircling ring structure. Interacts with ORF6 protein. In terms of assembly, homodimer. Interacts with nsp12. Homododecamer. Interacts with proofreading exoribonuclease nsp14 and 2'-O-methyltransferase nsp16; these interactions enhance nsp14 and nsp16 enzymatic activities. As to quaternary structure, interacts with nsp7 and nsp8 to form the replication-transcription complex (RTC): nsp12, nsp7, two subunits of nsp8, and up to two subunits of nsp13. Interacts with nsp9. In terms of assembly, interacts with nsp8 to form the replication-transcription complex (RTC): nsp12, nsp7, two subunits of nsp8, and up to two subunits of nsp13. Interacts (via N-terminus) with host DDX1. Interacts with non-structural protein 10. As to quaternary structure, homohexamer. In terms of assembly, interacts with nsp10. Zn(2+) serves as cofactor. Mn(2+) is required as a cofactor. Requires Mg(2+) as cofactor. Post-translationally, specific enzymatic cleavages in vivo by its own proteases yield mature proteins. 3C-like proteinase nsp5 liberates nsps 6-16 from the polyprotein. Papain-like and 3C-like proteinases are autocatalytically processed.

The protein resides in the host cytoplasm. It is found in the host endosome. Its subcellular location is the host membrane. The protein localises to the host Golgi apparatus. It localises to the host perinuclear region. The protein resides in the host endoplasmic reticulum. It is found in the host endoplasmic reticulum-Golgi intermediate compartment. The enzyme catalyses RNA(n) + a ribonucleoside 5'-triphosphate = RNA(n+1) + diphosphate. It carries out the reaction ATP + H2O = ADP + phosphate + H(+). The catalysed reaction is TSAVLQ-|-SGFRK-NH2 and SGVTFQ-|-GKFKK the two peptides corresponding to the two self-cleavage sites of the SARS 3C-like proteinase are the two most reactive peptide substrates. The enzyme exhibits a strong preference for substrates containing Gln at P1 position and Leu at P2 position.. It catalyses the reaction Thiol-dependent hydrolysis of ester, thioester, amide, peptide and isopeptide bonds formed by the C-terminal Gly of ubiquitin (a 76-residue protein attached to proteins as an intracellular targeting signal).. The enzyme catalyses a 5'-end (N(7)-methyl 5'-triphosphoguanosine)-ribonucleoside in mRNA + S-adenosyl-L-methionine = a 5'-end (N(7)-methyl 5'-triphosphoguanosine)-(2'-O-methyl-ribonucleoside) in mRNA + S-adenosyl-L-homocysteine + H(+). It carries out the reaction uridylyl-uridylyl-ribonucleotide-RNA = a 3'-end uridylyl-2',3'-cyclophospho-uridine-RNA + a 5'-end dephospho-ribonucleoside-RNA. The catalysed reaction is a 5'-end (5'-triphosphoguanosine)-ribonucleoside in mRNA + S-adenosyl-L-methionine = a 5'-end (N(7)-methyl 5'-triphosphoguanosine)-ribonucleoside in mRNA + S-adenosyl-L-homocysteine. It catalyses the reaction a 5'-end diphospho-ribonucleoside in mRNA + GTP + H(+) = a 5'-end (5'-triphosphoguanosine)-ribonucleoside in mRNA + diphosphate. Inhibited by Remdesivir (GS-5734). In terms of biological role, multifunctional protein involved in the transcription and replication of viral RNAs. Contains the proteinases responsible for the cleavages of the polyprotein. Its function is as follows. Inhibits host translation by interacting with the 40S ribosomal subunit. The nsp1-40S ribosome complex further induces an endonucleolytic cleavage near the 5'UTR of host mRNAs, targeting them for degradation. Viral mRNAs are not susceptible to nsp1-mediated endonucleolytic RNA cleavage thanks to the presence of a 5'-end leader sequence and are therefore protected from degradation. By suppressing host gene expression, nsp1 facilitates efficient viral gene expression in infected cells and evasion from host immune response. May disrupt nuclear pore function by binding and displacing host NUP93. Functionally, may play a role in the modulation of host cell survival signaling pathway by interacting with host PHB and PHB2. Indeed, these two proteins play a role in maintaining the functional integrity of the mitochondria and protecting cells from various stresses. Responsible for the cleavages located at the N-terminus of the replicase polyprotein. In addition, PL-PRO possesses a deubiquitinating/deISGylating activity and processes both 'Lys-48'- and 'Lys-63'-linked polyubiquitin chains from cellular substrates. Plays a role in host membrane rearrangement that leads to creation of cytoplasmic double-membrane vesicles (DMV) necessary for viral replication. Nsp3, nsp4 and nsp6 together are sufficient to form DMV. Antagonizes innate immune induction of type I interferon by blocking the phosphorylation, dimerization and subsequent nuclear translocation of host IRF3. Also prevents host NF-kappa-B signaling. In terms of biological role, plays a role in host membrane rearrangement that leads to creation of cytoplasmic double-membrane vesicles (DMV) necessary for viral replication. Alone appears incapable to induce membrane curvature, but together with nsp3 is able to induce paired membranes. Nsp3, nsp4 and nsp6 together are sufficient to form DMV. Its function is as follows. Cleaves the C-terminus of replicase polyprotein at 11 sites. Recognizes substrates containing the core sequence [ILMVF]-Q-|-[SGACN]. May cleave human NLRP1 in lung epithelial cells, thereby activating the NLRP1 inflammasome pathway. Also able to bind an ADP-ribose-1''-phosphate (ADRP). May cleave host ATP6V1G1 thereby modifying host vacuoles intracellular pH. Functionally, plays a role in host membrane rearrangement that leads to creation of cytoplasmic double-membrane vesicles (DMV) necessary for viral replication. Nsp3, nsp4 and nsp6 together are sufficient to form DMV. Plays a role in the initial induction of autophagosomes from host endoplasmic reticulum. Later, limits the expansion of these phagosomes that are no longer able to deliver viral components to lysosomes. Forms a hexadecamer with nsp8 (8 subunits of each) that may participate in viral replication by acting as a primase. Alternatively, may synthesize substantially longer products than oligonucleotide primers. In terms of biological role, forms a hexadecamer with nsp7 (8 subunits of each) that may participate in viral replication by acting as a primase. Alternatively, may synthesize substantially longer products than oligonucleotide primers. Its function is as follows. Forms a primer, NSP9-pU, which is utilized by the polymerase for the initiation of RNA chains. Interacts with ribosome signal recognition particle RNA (SRP). Together with NSP8, suppress protein integration into the cell membrane, thereby disrupting host immune defenses. Functionally, plays a pivotal role in viral transcription by stimulating both nsp14 3'-5' exoribonuclease and nsp16 2'-O-methyltransferase activities. Therefore plays an essential role in viral mRNAs cap methylation. RNA-directed RNA polymerase that catalyzes the transcription of viral genomic and subgenomic RNAs. Acts in complex with nsp7 and nsp8 to transcribe both the minus and positive strands of genomic RNA. The kinase-like NiRAN domain of NSP12 attaches one or more nucleotides to the amino terminus of NSP9, forming a covalent RNA-protein intermediate that serves as transcription/replication primer. Subgenomic RNAs (sgRNAs) are formed by discontinuous transcription: The polymerase has the ability to pause at transcription-regulating sequences (TRS) and jump to the leader TRS, resulting in a major deletion. This creates a series of subgenomic RNAs that are replicated, transcribed and translated. In addition, Nsp12 is a subunit of the viral RNA capping enzyme that catalyzes the RNA guanylyltransferase reaction for genomic and sub-genomic RNAs. Subsequently, the NiRAN domain transfers RNA to GDP, and forms the core cap structure GpppA-RNA. In terms of biological role, multi-functional protein with a zinc-binding domain in N-terminus displaying RNA and DNA duplex-unwinding activities with 5' to 3' polarity. Activity of helicase is dependent on magnesium. Its function is as follows. Plays a role in viral RNA synthesis through two distinct activities. The N7-guanine methyltransferase activity plays a role in the formation of the cap structure GpppA-RNA. The proofreading exoribonuclease reduces the sensitivity of the virus to RNA mutagens during replication. This activity acts on both ssRNA and dsRNA in a 3'-5' direction. Functionally, plays a role in viral transcription/replication and prevents the simultaneous activation of host cell dsRNA sensors, such as MDA5/IFIH1, OAS, and PKR. Acts by degrading the 5'-polyuridines generated during replication of the poly(A) region of viral genomic and subgenomic RNAs. Catalyzes a two-step reaction in which a 2'3'-cyclic phosphate (2'3'-cP) is first generated by 2'-O transesterification, which is then hydrolyzed to a 3'-phosphate (3'-P). If not degraded, poly(U) RNA would hybridize with poly(A) RNA tails and activate host dsRNA sensors. Methyltransferase that mediates mRNA cap 2'-O-ribose methylation to the 5'-cap structure of viral mRNAs. N7-methyl guanosine cap is a prerequisite for binding of nsp16. Therefore plays an essential role in viral mRNAs cap methylation which is essential to evade immune system. This Severe acute respiratory syndrome coronavirus (SARS-CoV) protein is Replicase polyprotein 1ab (rep).